A 954-amino-acid polypeptide reads, in one-letter code: Zinc finger protein 618 (954 aa).

Met1 carries the post-translational modification N-acetylmethionine. Positions 1 to 19 (MNQPGGAAAPQADGASAAG) are enriched in low complexity. The tract at residues 1–56 (MNQPGGAAAPQADGASAAGRKSTASRERLKRSQKSTKVEGPEPVPAEASLSAEQGT) is disordered. Glycyl lysine isopeptide (Lys-Gly) (interchain with G-Cter in SUMO2) cross-links involve residues Lys63 and Lys81. 2 consecutive C2H2-type zinc fingers follow at residues 147-169 (YECG…VRAH) and 188-210 (YTCD…RDLH). Lys239 participates in a covalent cross-link: Glycyl lysine isopeptide (Lys-Gly) (interchain with G-Cter in SUMO2). The C2H2-type 3 zinc-finger motif lies at 256–278 (YTCEFCGKQYKYYTPYQEHVALH). 2 disordered regions span residues 282–307 (STAP…VSPS) and 337–390 (RTPP…NSSE). The span at 340–357 (PATQTQTFRTPNSGSPAS) shows a compositional bias: polar residues. The segment covering 366-380 (FSRRVEGKAQNHFEE) has biased composition (basic and acidic residues). Residues 392-414 (YTCGACGIQFQFYNNLLEHMQSH) form a C2H2-type 4 zinc finger. Positions 421-463 (NIASNQSRSPPAVVEEKWKPQAQRNSANNTTTSGLTPNSMIPE) are disordered. A Glycyl lysine isopeptide (Lys-Gly) (interchain with G-Cter in SUMO2) cross-link involves residue Lys437. Residues 442 to 459 (AQRNSANNTTTSGLTPNS) show a composition bias toward polar residues.

It belongs to the krueppel C2H2-type zinc-finger protein family. As to quaternary structure, interacts with UHRF2.

It localises to the nucleus. The protein resides in the chromosome. Functionally, regulates UHRF2 function as a specific 5-hydroxymethylcytosine (5hmC) reader by regulating its chromatin localization. This is Zinc finger protein 618 (ZNF618) from Homo sapiens (Human).